We begin with the raw amino-acid sequence, 330 residues long: ADP-L-glycero-D-manno-heptose-6-epimerase (330 aa).

NADP(+) contacts are provided by residues 11 to 12 (FI), 32 to 33 (DD), Gln-39, Gln-54, 75 to 79 (QGACA), and Asn-92. The active-site Proton acceptor is the Tyr-139. An NADP(+)-binding site is contributed by Lys-143. A substrate-binding site is contributed by Asn-168. Residues Val-169 and Lys-177 each contribute to the NADP(+) site. Lys-177 serves as the catalytic Proton acceptor. Substrate-binding positions include Arg-179, His-186, 200-203 (FGEH), Arg-213, and Tyr-292.

It belongs to the NAD(P)-dependent epimerase/dehydratase family. HldD subfamily. As to quaternary structure, homopentamer. NADP(+) serves as cofactor.

It catalyses the reaction ADP-D-glycero-beta-D-manno-heptose = ADP-L-glycero-beta-D-manno-heptose. The protein operates within nucleotide-sugar biosynthesis; ADP-L-glycero-beta-D-manno-heptose biosynthesis; ADP-L-glycero-beta-D-manno-heptose from D-glycero-beta-D-manno-heptose 7-phosphate: step 4/4. Its function is as follows. Catalyzes the interconversion between ADP-D-glycero-beta-D-manno-heptose and ADP-L-glycero-beta-D-manno-heptose via an epimerization at carbon 6 of the heptose. The chain is ADP-L-glycero-D-manno-heptose-6-epimerase from Pseudomonas aeruginosa (strain UCBPP-PA14).